Reading from the N-terminus, the 312-residue chain is Olfactory receptor 2M3 (312 aa).

Over 1-25 (MARENSTFNSDFILLGIFNHSPTHT) the chain is Extracellular. N-linked (GlcNAc...) asparagine glycosylation occurs at Asn5. The chain crosses the membrane as a helical span at residues 26-49 (FLFFLVLAIFSVAFMGNSVMVLLI). The Cytoplasmic segment spans residues 50–57 (YLDTQLHT). The chain crosses the membrane as a helical span at residues 58-79 (PMYLLLSQLSLMDLMLICTTVP). Residues 80 to 100 (KMAFNYLSGSKSISMAGCATQ) are Extracellular-facing. Cys97 and Cys189 are disulfide-bonded. Residues 101–120 (IFFYTSLLGSECFLLAVMAY) traverse the membrane as a helical segment. The Cytoplasmic segment spans residues 121–139 (DRYTAICHPLRYTNLMSPK). The chain crosses the membrane as a helical span at residues 140–158 (ICGLMTAFSWILGSTDGII). The Extracellular segment spans residues 159-195 (DVVATFSFSYCGSREIAHFFCDFPSLLILSCSDTSIF). Residues 196–219 (EKILFICCIVMIVFPVAIIIASYA) form a helical membrane-spanning segment. Over 220 to 236 (RVILAVIHMGSGEGRRK) the chain is Cytoplasmic. Residues 237–259 (AFTTCSSHLLVVGMYYGAALFMY) form a helical membrane-spanning segment. Residues 260–272 (IRPTSDRSPTQDK) are Extracellular-facing. The chain crosses the membrane as a helical span at residues 273-292 (MVSVFYTILTPMLNPLIYSL). Topologically, residues 293–312 (RNKEVTRAFMKILGKGKSGE) are cytoplasmic.

Belongs to the G-protein coupled receptor 1 family.

The protein localises to the cell membrane. Odorant receptor. The sequence is that of Olfactory receptor 2M3 (OR2M3) from Homo sapiens (Human).